Here is a 127-residue protein sequence, read N- to C-terminus: UPF0102 protein NFA_41430 (127 aa).

This sequence belongs to the UPF0102 family.

The protein is UPF0102 protein NFA_41430 of Nocardia farcinica (strain IFM 10152).